Consider the following 244-residue polypeptide: Agamous-like MADS-box protein MADS2 (244 aa).

The MADS-box domain occupies 1-61 (MGRGRVELKR…GKLYEFCSSS (61 aa)). Residues 88–178 (EQSSYREYLK…TRKLDEISVK (91 aa)) enclose the K-box domain.

Expressed in flowers and seeds.

Its subcellular location is the nucleus. In terms of biological role, probable transcription factor involved in flower development. The sequence is that of Agamous-like MADS-box protein MADS2 from Vitis vinifera (Grape).